A 103-amino-acid polypeptide reads, in one-letter code: Histone H4 (103 aa).

Over residues 1–14 (MSGRGKGGKGLGKG) the composition is skewed to gly residues. The tract at residues 1–20 (MSGRGKGGKGLGKGGAKRHR) is disordered. Residues 17–21 (KRHRK) mediate DNA binding.

It belongs to the histone H4 family. As to quaternary structure, the nucleosome is a histone octamer containing two molecules each of H2A, H2B, H3 and H4 assembled in one H3-H4 heterotetramer and two H2A-H2B heterodimers. The octamer wraps approximately 147 bp of DNA.

Its subcellular location is the nucleus. The protein localises to the chromosome. In terms of biological role, core component of nucleosome. Nucleosomes wrap and compact DNA into chromatin, limiting DNA accessibility to the cellular machineries which require DNA as a template. Histones thereby play a central role in transcription regulation, DNA repair, DNA replication and chromosomal stability. DNA accessibility is regulated via a complex set of post-translational modifications of histones, also called histone code, and nucleosome remodeling. This is Histone H4 (H4-I) from Chlamydomonas reinhardtii (Chlamydomonas smithii).